We begin with the raw amino-acid sequence, 408 residues long: Tyrosine--tRNA ligase (408 aa).

A 'HIGH' region motif is present at residues 46 to 55 (PTAPDLHVGH). The 'KMSKS' region signature appears at 230–234 (KMSKS). Lys-233 serves as a coordination point for ATP. In terms of domain architecture, S4 RNA-binding spans 343-404 (VWICRLLTDA…GKRRFARIKF (62 aa)).

This sequence belongs to the class-I aminoacyl-tRNA synthetase family. TyrS type 2 subfamily. Homodimer.

The protein localises to the cytoplasm. It carries out the reaction tRNA(Tyr) + L-tyrosine + ATP = L-tyrosyl-tRNA(Tyr) + AMP + diphosphate + H(+). Catalyzes the attachment of tyrosine to tRNA(Tyr) in a two-step reaction: tyrosine is first activated by ATP to form Tyr-AMP and then transferred to the acceptor end of tRNA(Tyr). The chain is Tyrosine--tRNA ligase from Syntrophotalea carbinolica (strain DSM 2380 / NBRC 103641 / GraBd1) (Pelobacter carbinolicus).